Here is a 238-residue protein sequence, read N- to C-terminus: Probable solute-binding protein AdeT2 (238 aa).

Belongs to the bacterial solute-binding protein 7 family.

Mediates antimicrobial resistance via active efflux. Contributes to resistance to antibiotics such as chloramphenicol, erythromycin and novobiocin. May be part of a tripartite ATP-independent periplasmic (TRAP) transport system. The chain is Probable solute-binding protein AdeT2 from Acinetobacter baumannii.